The primary structure comprises 611 residues: Sensor histidine kinase WalK (611 aa).

The Cytoplasmic segment spans residues 1–13 (MNKVGFFRSIQFK). A helical transmembrane segment spans residues 14–34 (ITLIYVLLIIIAMQIIGVYFV). Residues 35-182 (NQVEKSLISS…VFNQMKTINT (148 aa)) lie on the Extracellular side of the membrane. A helical membrane pass occupies residues 183–203 (ILASGTGLALVLTALLGIFLA). Positions 204–256 (RTITHPLSDMRKQAMELAKGNFSRKVKKYGHDEIGQLATTFNHLTRELEDAQA) constitute an HAMP domain. The Cytoplasmic portion of the chain corresponds to 204 to 611 (RTITHPLSDM…EEQEDDWDEA (408 aa)). The PAS domain occupies 263–324 (RKLASVIAYM…QENYTFEDLV (62 aa)). A PAC domain is found at 325–379 (EQQDSMLLEIERDDELTVLRVNFSVIQREHGKIDGLIAVIYDVTEQEKMDQERRE). The Histidine kinase domain occupies 383-602 (NVSHELRTPL…TITFTLPYKE (220 aa)). Residue H386 is modified to Phosphohistidine; by autocatalysis.

As to quaternary structure, homodimer. Interacts with YycH and YycI. In terms of processing, autophosphorylated.

It is found in the cell membrane. It carries out the reaction ATP + protein L-histidine = ADP + protein N-phospho-L-histidine.. Functionally, member of the two-component regulatory system WalK/WalR involved in the regulation of the ftsAZ operon, the yocH and ykvT, cwlO, lytE, ydjM, yjeA, yoeB genes and the tagAB and tagDEF operons. Phosphorylates WalR. The sequence is that of Sensor histidine kinase WalK from Bacillus subtilis (strain 168).